Reading from the N-terminus, the 110-residue chain is Thioredoxin Asp f 29 (110 aa).

In terms of domain architecture, Thioredoxin spans 1-110 (MSHNVEKITD…LEAAIKAHVA (110 aa)). Active-site nucleophile residues include Cys34 and Cys37. Cys34 and Cys37 are joined by a disulfide.

The protein belongs to the thioredoxin family.

Functionally, participates in various redox reactions through the reversible oxidation of its active center dithiol to a disulfide and catalyzes dithiol-disulfide exchange reactions. The polypeptide is Thioredoxin Asp f 29 (Aspergillus fumigatus (Neosartorya fumigata)).